A 284-amino-acid polypeptide reads, in one-letter code: uncharacterized protein (284 aa).

Composition is skewed to low complexity over residues 110–123 (NGPR…PNNG) and 130–149 (NGPM…NGPN). The interval 110-176 (NGPRGRQMNG…PNEFDSDDDD (67 aa)) is disordered.

Its subcellular location is the virion. This is an uncharacterized protein from Acanthamoeba polyphaga mimivirus (APMV).